Reading from the N-terminus, the 244-residue chain is MIPWLEADDPFPHVSSALTEADGAAGLLAAGADLSTGRLLQAYKHGIFPWFSEGQPILWWSTDPRMVLFVENFRISASLKKKLKKIHHSITSRDGQWEIRFDHAFEEVMRACAAPRNGEGGTWISDEIIAGYTGLHKLGYAHSSELWLQGKLVGAAYGVSIGQMFYGESMFARVPDASKIALAYLVHFLRNHDVSMIDCQQETSHLATLGAAPIARTEFISRLRQAVSGPQISNWQPIALFPHD.

Belongs to the L/F-transferase family.

The protein localises to the cytoplasm. The enzyme catalyses N-terminal L-lysyl-[protein] + L-leucyl-tRNA(Leu) = N-terminal L-leucyl-L-lysyl-[protein] + tRNA(Leu) + H(+). It carries out the reaction N-terminal L-arginyl-[protein] + L-leucyl-tRNA(Leu) = N-terminal L-leucyl-L-arginyl-[protein] + tRNA(Leu) + H(+). It catalyses the reaction L-phenylalanyl-tRNA(Phe) + an N-terminal L-alpha-aminoacyl-[protein] = an N-terminal L-phenylalanyl-L-alpha-aminoacyl-[protein] + tRNA(Phe). Functionally, functions in the N-end rule pathway of protein degradation where it conjugates Leu, Phe and, less efficiently, Met from aminoacyl-tRNAs to the N-termini of proteins containing an N-terminal arginine or lysine. The protein is Leucyl/phenylalanyl-tRNA--protein transferase of Janthinobacterium sp. (strain Marseille) (Minibacterium massiliensis).